The following is a 424-amino-acid chain: UDP-N-acetylglucosamine 1-carboxyvinyltransferase (424 aa).

A phosphoenolpyruvate-binding site is contributed by 22-23; sequence KN. A UDP-N-acetyl-alpha-D-glucosamine-binding site is contributed by Arg95. Cys119 acts as the Proton donor in catalysis. At Cys119 the chain carries 2-(S-cysteinyl)pyruvic acid O-phosphothioketal. UDP-N-acetyl-alpha-D-glucosamine-binding positions include 124 to 128, Asp311, and Ile333; that span reads RPVDQ.

It belongs to the EPSP synthase family. MurA subfamily.

The protein localises to the cytoplasm. It carries out the reaction phosphoenolpyruvate + UDP-N-acetyl-alpha-D-glucosamine = UDP-N-acetyl-3-O-(1-carboxyvinyl)-alpha-D-glucosamine + phosphate. Its pathway is cell wall biogenesis; peptidoglycan biosynthesis. Cell wall formation. Adds enolpyruvyl to UDP-N-acetylglucosamine. In Polaromonas naphthalenivorans (strain CJ2), this protein is UDP-N-acetylglucosamine 1-carboxyvinyltransferase.